We begin with the raw amino-acid sequence, 112 residues long: Integration host factor subunit alpha (112 aa).

The protein belongs to the bacterial histone-like protein family. In terms of assembly, heterodimer of an alpha and a beta chain.

In terms of biological role, this protein is one of the two subunits of integration host factor, a specific DNA-binding protein that functions in genetic recombination as well as in transcriptional and translational control. This Rhizobium johnstonii (strain DSM 114642 / LMG 32736 / 3841) (Rhizobium leguminosarum bv. viciae) protein is Integration host factor subunit alpha.